The sequence spans 69 residues: Light-harvesting protein B-870 beta chain (69 aa).

Positions 1-2 (MA) are excised as a propeptide. Residues 3–22 (EVKQESLSGITEGEAKEFHK) are Cytoplasmic-facing. A bacteriochlorophyll is bound by residues H21 and H39. A helical membrane pass occupies residues 23–45 (IFTSSILVFFGVAAFAHLLVWIW). Topologically, residues 46–56 (RPWVPGPNGYS) are periplasmic. Residues 57-69 (ALETLTQTLTYLS) constitute a propeptide that is removed on maturation.

It belongs to the antenna complex beta subunit family. The core complex is formed by different alpha and beta chains, binding bacteriochlorophyll molecules, and arranged most probably in tetrameric structures disposed around the reaction center. The non-pigmented gamma chains may constitute additional components.

The protein resides in the cell inner membrane. Antenna complexes are light-harvesting systems, which transfer the excitation energy to the reaction centers. The sequence is that of Light-harvesting protein B-870 beta chain from Rhodospirillum rubrum (strain ATCC 11170 / ATH 1.1.1 / DSM 467 / LMG 4362 / NCIMB 8255 / S1).